Here is a 99-residue protein sequence, read N- to C-terminus: Aspartyl/glutamyl-tRNA(Asn/Gln) amidotransferase subunit C (99 aa).

This sequence belongs to the GatC family. Heterotrimer of A, B and C subunits.

The catalysed reaction is L-glutamyl-tRNA(Gln) + L-glutamine + ATP + H2O = L-glutaminyl-tRNA(Gln) + L-glutamate + ADP + phosphate + H(+). The enzyme catalyses L-aspartyl-tRNA(Asn) + L-glutamine + ATP + H2O = L-asparaginyl-tRNA(Asn) + L-glutamate + ADP + phosphate + 2 H(+). Functionally, allows the formation of correctly charged Asn-tRNA(Asn) or Gln-tRNA(Gln) through the transamidation of misacylated Asp-tRNA(Asn) or Glu-tRNA(Gln) in organisms which lack either or both of asparaginyl-tRNA or glutaminyl-tRNA synthetases. The reaction takes place in the presence of glutamine and ATP through an activated phospho-Asp-tRNA(Asn) or phospho-Glu-tRNA(Gln). The protein is Aspartyl/glutamyl-tRNA(Asn/Gln) amidotransferase subunit C of Thermobifida fusca (strain YX).